A 345-amino-acid polypeptide reads, in one-letter code: D-apiose dehydrogenase (345 aa).

NAD(+) is bound at residue 15 to 16 (FF). Mg(2+) contacts are provided by Trp-24, Lys-25, Val-27, and Ala-30. Residues Asp-37, Ser-79, 97-98 (QK), Asn-126, and 165-167 (QPY) contribute to the NAD(+) site. Lys-98 lines the substrate pocket. Substrate-binding residues include Gln-165, Asp-178, His-182, and Tyr-232.

Belongs to the Gfo/Idh/MocA family.

It catalyses the reaction D-apiofuranose + NAD(+) = D-apionolactone + NADH + H(+). It participates in carbohydrate metabolism. Its function is as follows. Involved in catabolism of D-apiose. Catalyzes oxidation of D-apiose to D-apionolactone. This Rhizobium rhizogenes (strain K84 / ATCC BAA-868) (Agrobacterium radiobacter) protein is D-apiose dehydrogenase.